Reading from the N-terminus, the 180-residue chain is Small ribosomal subunit protein uS4 (180 aa).

Positions 102–174 constitute an S4 RNA-binding domain; sequence RRLQTMLVRK…PARKLEQKEE (73 aa). The disordered stretch occupies residues 154 to 180; it reads VPFSPLANPEHPARKLEQKEETNEESA. The span at 164 to 174 shows a compositional bias: basic and acidic residues; the sequence is HPARKLEQKEE.

This sequence belongs to the universal ribosomal protein uS4 family. Part of the 30S ribosomal subunit. Contacts protein S5. The interaction surface between S4 and S5 is involved in control of translational fidelity.

One of the primary rRNA binding proteins, it binds directly to 16S rRNA where it nucleates assembly of the body of the 30S subunit. Functionally, with S5 and S12 plays an important role in translational accuracy. This is Small ribosomal subunit protein uS4 from Nanoarchaeum equitans (strain Kin4-M).